The chain runs to 91 residues: Non-structural protein 3a (91 aa).

Residues 1-19 (MVSFNATAILLVLVANAFS) form the signal peptide.

The chain is Non-structural protein 3a from Tylonycteris pachypus (Lesser bamboo bat).